A 306-amino-acid chain; its full sequence is MEVTFFGTSAGLPTKERNTQAIALNLEPYSNSIWLFDVGEGTQHQILHHAIKLGKVTHIFITHMHGDHIFGLPGLLSSRSFQGGEQKPLTLVGPKGIKAYVEMSMNLSESHLNYPITYIEIDDHLTYHHDGFTVEAHLLNHGVPSYGYRVMAPETTGTINVEALKNIGLEPGPKYQEVKSHDTFEHNGQVYQSKDFRGESKQGPVVAIFGDTKPCSNERVISRDADVMVHEATYIDGEKHLANNYHHSHIEDVFALIKEANVKRTLITHLSNRYNTEDINEIYQTLIQNEDTPNFNFVKDFDSFKV.

Zn(2+) contacts are provided by His-63, His-65, Asp-67, His-68, His-141, Asp-211, and His-269. The Proton acceptor role is filled by Asp-67.

This sequence belongs to the RNase Z family. In terms of assembly, homodimer. It depends on Zn(2+) as a cofactor.

It carries out the reaction Endonucleolytic cleavage of RNA, removing extra 3' nucleotides from tRNA precursor, generating 3' termini of tRNAs. A 3'-hydroxy group is left at the tRNA terminus and a 5'-phosphoryl group is left at the trailer molecule.. Zinc phosphodiesterase, which displays some tRNA 3'-processing endonuclease activity. Probably involved in tRNA maturation, by removing a 3'-trailer from precursor tRNA. This Staphylococcus aureus (strain MSSA476) protein is Ribonuclease Z.